The chain runs to 129 residues: GEL complex subunit OPTI (129 aa).

Residues 1-44 (MSGGRRKEEPPQPQLANGALKVSVWSKVLRSDAAWDDKDEFLDV) are Cytoplasmic-facing. Residues 45–65 (IYWFRQIIALVLGVIWGVLPL) traverse the membrane as a helical segment. Arginine 66 is a topological domain (lumenal). A helical membrane pass occupies residues 67–84 (GFLGIAGFCLINAGVLYL). The Cytoplasmic portion of the chain corresponds to 85–103 (YFSNYLQIDEEEYGGTWEL). The chain crosses the membrane as a helical span at residues 104-127 (TKEGFMTSFALFMVIWIIFYTAIH). Residues 128 to 129 (YD) are Lumenal-facing.

Belongs to the EMC6 family. Component of the GET- and EMC-like (GEL) complex, composed of RAB5IF/OPTI and TMCO1. The GEL complex is part of the multi-pass translocon (MPT) complex, composed of three subcomplexes, the GEL complex (composed of RAB5IF/OPTI and TMCO1), the BOS complex (composed of NCLN/Nicalin, NOMO1 and TMEM147) and the PAT complex (composed of WDR83OS/Asterix and CCDC47). The MPT complex associates with the SEC61 complex. Interacts with NDUFS3, NDUFA4, NDUFV1, NDUFA9 and NDUFS8 of the mitochondrial membrane respiratory chain NADH dehydrogenase (Complex I). Interacts with UQCRC2 of the ubiquinol-cytochrome c reductase complex (Complex III). Interacts with COX5A and COX7C of the cytochrome c oxidase complex (Complex IV). In terms of tissue distribution, expressed in neuronal cells.

It is found in the endoplasmic reticulum membrane. Its subcellular location is the mitochondrion inner membrane. In terms of biological role, component of the multi-pass translocon (MPT) complex that mediates insertion of multi-pass membrane proteins into the lipid bilayer of membranes. The MPT complex takes over after the SEC61 complex: following membrane insertion of the first few transmembrane segments of proteins by the SEC61 complex, the MPT complex occludes the lateral gate of the SEC61 complex to promote insertion of subsequent transmembrane regions. Within the MPT complex, the GEL subcomplex may mediate insertion of transmembrane regions into the membrane. In addition to its role in multi-pass membrane insertion, RAB5IF/OPTI also acts as an assembly factor for mitochondrial respiratory complexes. The polypeptide is GEL complex subunit OPTI (Mus musculus (Mouse)).